We begin with the raw amino-acid sequence, 544 residues long: Chaperonin GroEL 3 (544 aa).

ATP-binding positions include 30 to 33 (TLGP), Lys-51, 87 to 91 (DGTTT), Gly-415, and Asp-496.

Belongs to the chaperonin (HSP60) family. In terms of assembly, forms a cylinder of 14 subunits composed of two heptameric rings stacked back-to-back. Interacts with the co-chaperonin GroES.

It localises to the cytoplasm. It catalyses the reaction ATP + H2O + a folded polypeptide = ADP + phosphate + an unfolded polypeptide.. Together with its co-chaperonin GroES, plays an essential role in assisting protein folding. The GroEL-GroES system forms a nano-cage that allows encapsulation of the non-native substrate proteins and provides a physical environment optimized to promote and accelerate protein folding. The protein is Chaperonin GroEL 3 of Rhizobium meliloti (strain 1021) (Ensifer meliloti).